A 621-amino-acid chain; its full sequence is Probable potassium transport system protein Kup 2 (621 aa).

12 helical membrane passes run 9-29, 48-68, 101-121, 136-156, 164-184, 210-230, 246-266, 275-295, 336-356, 364-384, 393-413, and 418-438; these read MAGL…TSPL, IFGI…VKYV, IVLL…ITPA, SGME…LFLL, VGLM…ILGL, GFHA…AEAL, WFSL…ALLM, PFFL…ATLA, IYMP…VLTF, AAYG…FFVV, LPLA…FFAA, and VADG…LMST.

Belongs to the HAK/KUP transporter (TC 2.A.72) family.

Its subcellular location is the cell inner membrane. The enzyme catalyses K(+)(in) + H(+)(in) = K(+)(out) + H(+)(out). In terms of biological role, transport of potassium into the cell. Likely operates as a K(+):H(+) symporter. The sequence is that of Probable potassium transport system protein Kup 2 from Chromobacterium violaceum (strain ATCC 12472 / DSM 30191 / JCM 1249 / CCUG 213 / NBRC 12614 / NCIMB 9131 / NCTC 9757 / MK).